Here is a 1721-residue protein sequence, read N- to C-terminus: Ras guanine nucleotide exchange factor R (1721 aa).

Residues 148–279 (QLEDEVDLVH…LQQQQQQQRS (132 aa)) adopt a coiled-coil conformation. Disordered regions lie at residues 213 to 232 (QQQK…KEEK), 445 to 515 (SSLG…NQQP), 551 to 701 (ATTT…VDKQ), 716 to 766 (RTPL…KSPS), 797 to 837 (TITI…TPNK), and 929 to 981 (DEVS…DPVS). A compositionally biased stretch (basic and acidic residues) spans 216–232 (KHQEEKEKNDQKEKEEK). Composition is skewed to low complexity over residues 454-469 (SPEK…STSE), 479-493 (HNNN…STNN), 501-515 (PSLS…NQQP), and 551-581 (ATTT…LSIS). The segment covering 618–627 (NGTTSPRNNE) has biased composition (polar residues). Composition is skewed to low complexity over residues 628-651 (SSVT…VNTI) and 663-686 (TPTT…SQND). A compositionally biased stretch (basic and acidic residues) spans 687-701 (KQNENNNKENFVDKQ). 3 stretches are compositionally biased toward low complexity: residues 724-748 (SSNS…TNSS), 797-836 (TITI…TTPN), and 933-952 (ESSS…NTPS). The stretch at 802–831 (NNNNNNNNNNNNNNNNNNNIQQQQQQQQQI) forms a coiled coil. A compositionally biased stretch (polar residues) spans 968 to 978 (NLSSINNSSYD). The 121-residue stretch at 1291-1411 (GRYVPKAGTL…ILGGLIKKKE (121 aa)) folds into the N-terminal Ras-GEF domain. Residues 1447–1676 (NESEIARQLT…YQLSLIREPR (230 aa)) form the Ras-GEF domain.

In terms of processing, phosphorylated on threonine residues.

Promotes the exchange of Ras-bound GDP by GTP. May also play a role in the activation of rasG. This Dictyostelium discoideum (Social amoeba) protein is Ras guanine nucleotide exchange factor R (gefR).